Here is a 73-residue protein sequence, read N- to C-terminus: Large ribosomal subunit protein bL31 (73 aa).

The Zn(2+) site is built by C16, C18, C38, and C41.

The protein belongs to the bacterial ribosomal protein bL31 family. Type A subfamily. Part of the 50S ribosomal subunit. Zn(2+) is required as a cofactor.

Binds the 23S rRNA. This chain is Large ribosomal subunit protein bL31, found in Vibrio parahaemolyticus serotype O3:K6 (strain RIMD 2210633).